The following is a 979-amino-acid chain: UPF0182 protein MRA_0066 (979 aa).

Transmembrane regions (helical) follow at residues 19-39, 63-83, 114-134, 174-194, 211-231, 260-280, and 288-308; these read LVTA…LVDI, LAIV…ALLL, LFGW…ASFD, WLFV…YLFG, VQLA…YWLD, KLVL…AIFL, and MAAA…PLLM. The tract at residues 898–948 is disordered; the sequence is GTGRVATARGGDAASAPPPGAGGPAPPQAVPPPRTTQPPAAPPRGPDVPPA. Residues 913-946 are compositionally biased toward pro residues; it reads APPPGAGGPAPPQAVPPPRTTQPPAAPPRGPDVP.

It belongs to the UPF0182 family.

The protein localises to the cell membrane. In Mycobacterium tuberculosis (strain ATCC 25177 / H37Ra), this protein is UPF0182 protein MRA_0066.